Here is a 118-residue protein sequence, read N- to C-terminus: Large ribosomal subunit protein uL18 (118 aa).

This sequence belongs to the universal ribosomal protein uL18 family. As to quaternary structure, part of the 50S ribosomal subunit; part of the 5S rRNA/L5/L18/L25 subcomplex. Contacts the 5S and 23S rRNAs.

In terms of biological role, this is one of the proteins that bind and probably mediate the attachment of the 5S RNA into the large ribosomal subunit, where it forms part of the central protuberance. The polypeptide is Large ribosomal subunit protein uL18 (Levilactobacillus brevis (strain ATCC 367 / BCRC 12310 / CIP 105137 / JCM 1170 / LMG 11437 / NCIMB 947 / NCTC 947) (Lactobacillus brevis)).